A 117-amino-acid polypeptide reads, in one-letter code: UPF0102 protein Spro_4337 (117 aa).

It belongs to the UPF0102 family.

This chain is UPF0102 protein Spro_4337, found in Serratia proteamaculans (strain 568).